Reading from the N-terminus, the 78-residue chain is Pigment-dispersing hormone peptides (78 aa).

A signal peptide spans 1–22 (MRSAVIVTMLVVVALAALLTQG). Ala-75 is modified (alanine amide).

The protein belongs to the arthropod PDH family. Expressed in eyestalk tissue and cerebral ganglia.

The protein localises to the secreted. In terms of biological role, the pigment-dispersing hormone causes the migration of the distal retinal pigment into the proximal end of the pigment chromatophore cells and thus decreases the amount of light entering the retinulas. May also function as a neurotransmitter and/or neuromodulator. The polypeptide is Pigment-dispersing hormone peptides (Carcinus maenas (Common shore crab)).